A 448-amino-acid chain; its full sequence is Serine--tRNA ligase (448 aa).

L-serine is bound at residue 246 to 248; sequence TAE. Residues 277-279 and Val-293 contribute to the ATP site; that span reads RKE. An L-serine-binding site is contributed by Glu-300. 364–367 provides a ligand contact to ATP; sequence ELAS. Residue Thr-399 coordinates L-serine.

The protein belongs to the class-II aminoacyl-tRNA synthetase family. Type-1 seryl-tRNA synthetase subfamily. In terms of assembly, homodimer. The tRNA molecule binds across the dimer.

It localises to the cytoplasm. The catalysed reaction is tRNA(Ser) + L-serine + ATP = L-seryl-tRNA(Ser) + AMP + diphosphate + H(+). It catalyses the reaction tRNA(Sec) + L-serine + ATP = L-seryl-tRNA(Sec) + AMP + diphosphate + H(+). It participates in aminoacyl-tRNA biosynthesis; selenocysteinyl-tRNA(Sec) biosynthesis; L-seryl-tRNA(Sec) from L-serine and tRNA(Sec): step 1/1. In terms of biological role, catalyzes the attachment of serine to tRNA(Ser). Is also able to aminoacylate tRNA(Sec) with serine, to form the misacylated tRNA L-seryl-tRNA(Sec), which will be further converted into selenocysteinyl-tRNA(Sec). The chain is Serine--tRNA ligase from Pyrobaculum islandicum (strain DSM 4184 / JCM 9189 / GEO3).